We begin with the raw amino-acid sequence, 118 residues long: Non-specific lipid-transfer protein 2 (118 aa).

The first 25 residues, 1 to 25, serve as a signal peptide directing secretion; sequence MARGMKLACVVLVICMVVIAPMAEG. 4 disulfide bridges follow: Cys-29/Cys-76, Cys-39/Cys-53, Cys-54/Cys-99, and Cys-74/Cys-113.

Belongs to the plant LTP family.

Functionally, plant non-specific lipid-transfer proteins transfer phospholipids as well as galactolipids across membranes. May play a role in wax or cutin deposition in the cell walls of expanding epidermal cells and certain secretory tissues. Binds saturated fatty acids, jasmonic acid and, with highest efficiency, unsaturated fatty acids and lysolipids. This is Non-specific lipid-transfer protein 2 from Lens culinaris (Lentil).